Here is a 123-residue protein sequence, read N- to C-terminus: Large ribosomal subunit protein bL12 (123 aa).

Belongs to the bacterial ribosomal protein bL12 family. In terms of assembly, homodimer. Part of the ribosomal stalk of the 50S ribosomal subunit. Forms a multimeric L10(L12)X complex, where L10 forms an elongated spine to which 2 to 4 L12 dimers bind in a sequential fashion. Binds GTP-bound translation factors.

In terms of biological role, forms part of the ribosomal stalk which helps the ribosome interact with GTP-bound translation factors. Is thus essential for accurate translation. In Haemophilus influenzae (strain 86-028NP), this protein is Large ribosomal subunit protein bL12.